Consider the following 359-residue polypeptide: GTP cyclohydrolase FolE2 (359 aa).

The protein belongs to the GTP cyclohydrolase IV family.

The catalysed reaction is GTP + H2O = 7,8-dihydroneopterin 3'-triphosphate + formate + H(+). Its pathway is cofactor biosynthesis; 7,8-dihydroneopterin triphosphate biosynthesis; 7,8-dihydroneopterin triphosphate from GTP: step 1/1. Converts GTP to 7,8-dihydroneopterin triphosphate. The polypeptide is GTP cyclohydrolase FolE2 (Cereibacter sphaeroides (strain KD131 / KCTC 12085) (Rhodobacter sphaeroides)).